A 254-amino-acid chain; its full sequence is 5'-nucleotidase SurE (254 aa).

The a divalent metal cation site is built by Asp-8, Asp-9, Ser-39, and Asn-91.

Belongs to the SurE nucleotidase family. A divalent metal cation serves as cofactor.

It is found in the cytoplasm. The catalysed reaction is a ribonucleoside 5'-phosphate + H2O = a ribonucleoside + phosphate. Its function is as follows. Nucleotidase that shows phosphatase activity on nucleoside 5'-monophosphates. The chain is 5'-nucleotidase SurE from Methylibium petroleiphilum (strain ATCC BAA-1232 / LMG 22953 / PM1).